The primary structure comprises 263 residues: Endonuclease 8 (263 aa).

P2 acts as the Schiff-base intermediate with DNA in catalysis. E3 (proton donor) is an active-site residue. Residue K53 is the Proton donor; for beta-elimination activity of the active site. DNA contacts are provided by Q70, R125, and N169. The FPG-type zinc finger occupies 229–263; the sequence is KVFHRDGEPCERCGGIIEKTTLSSRPFYWCPGCQH. The Proton donor; for delta-elimination activity role is filled by R253.

This sequence belongs to the FPG family. Zn(2+) is required as a cofactor.

The enzyme catalyses 2'-deoxyribonucleotide-(2'-deoxyribose 5'-phosphate)-2'-deoxyribonucleotide-DNA = a 3'-end 2'-deoxyribonucleotide-(2,3-dehydro-2,3-deoxyribose 5'-phosphate)-DNA + a 5'-end 5'-phospho-2'-deoxyribonucleoside-DNA + H(+). In terms of biological role, involved in base excision repair of DNA damaged by oxidation or by mutagenic agents. Acts as a DNA glycosylase that recognizes and removes damaged bases. Has a preference for oxidized pyrimidines, such as thymine glycol, 5,6-dihydrouracil and 5,6-dihydrothymine. Has AP (apurinic/apyrimidinic) lyase activity and introduces nicks in the DNA strand. Cleaves the DNA backbone by beta-delta elimination to generate a single-strand break at the site of the removed base with both 3'- and 5'-phosphates. This chain is Endonuclease 8, found in Escherichia coli (strain UTI89 / UPEC).